Consider the following 513-residue polypeptide: Cytochrome P450 705A1 (513 aa).

The helical transmembrane segment at 9–29 threads the bilayer; sequence QNCFIIILLCSFSLISYFVFF. C448 contributes to the heme binding site.

Belongs to the cytochrome P450 family. The cofactor is heme. Expressed in root stele, root cortex, root epidermis, root pericycle of the root hair zone, and quiescent center at the root meristematic zone.

It is found in the membrane. Cleaves the arabidiol side chain at C15 to form 14-apo-arabidiol and a side-chain fragment. Involved in the biosynthesis of the volatile homoterpene (E)-4,8-dimethyl-1,3,7-nonatriene (DMNT) in roots. Involved in the production of DMNT by degrading the triterpene arabidiol. May be involved in the defense again the fungal root pathogen Pythium irregulare by producing DMNT. The polypeptide is Cytochrome P450 705A1 (Arabidopsis thaliana (Mouse-ear cress)).